The sequence spans 260 residues: Acetylglutamate kinase (260 aa).

Substrate is bound by residues 46 to 47 (GG), Arg68, and Asn160.

The protein belongs to the acetylglutamate kinase family. ArgB subfamily.

The protein localises to the cytoplasm. The enzyme catalyses N-acetyl-L-glutamate + ATP = N-acetyl-L-glutamyl 5-phosphate + ADP. The protein operates within amino-acid biosynthesis; L-arginine biosynthesis; N(2)-acetyl-L-ornithine from L-glutamate: step 2/4. Catalyzes the ATP-dependent phosphorylation of N-acetyl-L-glutamate. The polypeptide is Acetylglutamate kinase (Shewanella sp. (strain MR-7)).